The sequence spans 130 residues: Probable 15 kDa heat shock protein (130 aa).

In terms of domain architecture, sHSP spans 21–130 (ERVRILAPRV…LTKKIEVRSE (110 aa)).

This sequence belongs to the small heat shock protein (HSP20) family.

This is Probable 15 kDa heat shock protein (hsp15) from Leptospira interrogans serogroup Icterohaemorrhagiae serovar Lai (strain 56601).